The primary structure comprises 137 residues: Peptide methionine sulfoxide reductase MsrB (137 aa).

The region spanning 7-129 (AEELKKNLSE…NSASLRFTDG (123 aa)) is the MsrB domain. Residues Cys-46, Cys-49, Cys-95, and Cys-98 each coordinate Zn(2+). The active-site Nucleophile is Cys-118.

Belongs to the MsrB Met sulfoxide reductase family. Zn(2+) is required as a cofactor.

The catalysed reaction is L-methionyl-[protein] + [thioredoxin]-disulfide + H2O = L-methionyl-(R)-S-oxide-[protein] + [thioredoxin]-dithiol. The polypeptide is Peptide methionine sulfoxide reductase MsrB (Escherichia coli O45:K1 (strain S88 / ExPEC)).